Reading from the N-terminus, the 389-residue chain is Urotensin-2 receptor (389 aa).

The span at 1–10 shows a compositional bias: polar residues; sequence MALTPESPSS. The segment at 1–39 is disordered; sequence MALTPESPSSFPGLAATGSSVPEPPGGPNATLNSSWASP. Residues 1–54 lie on the Extracellular side of the membrane; the sequence is MALTPESPSSFPGLAATGSSVPEPPGGPNATLNSSWASPTEPSSLEDLVATGTI. N-linked (GlcNAc...) asparagine glycosylation is found at N29 and N33. Residues 30–39 show a composition bias toward polar residues; sequence ATLNSSWASP. The helical transmembrane segment at 55-77 threads the bilayer; the sequence is GTLLSAMGVVGVVGNAYTLVVTC. At 78-87 the chain is on the cytoplasmic side; the sequence is RSLRAVASMY. Residues 88–113 form a helical membrane-spanning segment; sequence VYVVNLALADLLYLLSIPFIVATYVT. Over 114–124 the chain is Extracellular; that stretch reads KEWHFGDVGCR. Residues C123 and C199 are joined by a disulfide bond. The chain crosses the membrane as a helical span at residues 125–146; the sequence is VLFGLDFLTMHASIFTLTVMSS. Residues 147–167 are Cytoplasmic-facing; the sequence is ERYAAVLRPLDTVQRPKGYRK. Residues 168-186 traverse the membrane as a helical segment; sequence LLALGTWLLALLLTLPVML. Topologically, residues 187–209 are extracellular; that stretch reads AMRLVRRGPKSLCLPAWGPRAHR. Residues 210–232 traverse the membrane as a helical segment; sequence AYLTLLFATSIAGPGLLIGLLYA. Residues 233–258 are Cytoplasmic-facing; the sequence is RLARAYRRSQRASFKRARRPGARALR. A helical transmembrane segment spans residues 259–284; it reads LVLGIVLLFWACFLPFWLWQLLAQYH. Residues 285 to 297 lie on the Extracellular side of the membrane; that stretch reads QAPLAPRTARIVN. The chain crosses the membrane as a helical span at residues 298-318; the sequence is YLTTCLTYGNSCANPFLYTLL. At 319–389 the chain is on the cytoplasmic side; that stretch reads TRNYRDHLRG…PAPEGPRAPA (71 aa). Positions 328–389 are disordered; it reads GRVRGPGSGG…PAPEGPRAPA (62 aa). Residues 331 to 340 are compositionally biased toward gly residues; it reads RGPGSGGGRG. The span at 355–368 shows a compositional bias: polar residues; it reads SGRSLSSCSPQPTD. Residues 377–389 are compositionally biased toward pro residues; it reads PARPAPEGPRAPA.

It belongs to the G-protein coupled receptor 1 family. As to expression, most abundant expression in the heart and pancreas.

The protein resides in the cell membrane. High affinity receptor for urotensin-2 and urotensin-2B. The activity of this receptor is mediated by a G-protein that activate a phosphatidylinositol-calcium second messenger system. This is Urotensin-2 receptor (UTS2R) from Homo sapiens (Human).